A 156-amino-acid polypeptide reads, in one-letter code: 6,7-dimethyl-8-ribityllumazine synthase (156 aa).

5-amino-6-(D-ribitylamino)uracil contacts are provided by residues phenylalanine 22, 57–59 (AYE), and 81–83 (TVI). A (2S)-2-hydroxy-3-oxobutyl phosphate-binding site is contributed by 86 to 87 (GT). The active-site Proton donor is histidine 89. Phenylalanine 114 is a binding site for 5-amino-6-(D-ribitylamino)uracil. A (2S)-2-hydroxy-3-oxobutyl phosphate-binding site is contributed by arginine 128.

It belongs to the DMRL synthase family. In terms of assembly, forms an icosahedral capsid composed of 60 subunits, arranged as a dodecamer of pentamers.

It catalyses the reaction (2S)-2-hydroxy-3-oxobutyl phosphate + 5-amino-6-(D-ribitylamino)uracil = 6,7-dimethyl-8-(1-D-ribityl)lumazine + phosphate + 2 H2O + H(+). It participates in cofactor biosynthesis; riboflavin biosynthesis; riboflavin from 2-hydroxy-3-oxobutyl phosphate and 5-amino-6-(D-ribitylamino)uracil: step 1/2. Catalyzes the formation of 6,7-dimethyl-8-ribityllumazine by condensation of 5-amino-6-(D-ribitylamino)uracil with 3,4-dihydroxy-2-butanone 4-phosphate. This is the penultimate step in the biosynthesis of riboflavin. This Mannheimia succiniciproducens (strain KCTC 0769BP / MBEL55E) protein is 6,7-dimethyl-8-ribityllumazine synthase.